Consider the following 387-residue polypeptide: DNA-damage-repair/toleration protein 111 (387 aa).

Positions Met1 to Gly213 are disordered. Residues Ser19 to Ser29 are compositionally biased toward low complexity. Over residues Asp103 to Asp158 the composition is skewed to basic and acidic residues. The G-patch domain maps to Gln214–Ser260. The RRM domain maps to Arg283–Glu369.

In terms of assembly, component of the SWAP1-SFPS-RRC1 splicing factor complex which modulates pre-mRNA splicing to promote photomorphogenesis. Interacts with SWAP1 in a light-independent manner. Associates with the photoreceptor phytochrome B (phyB) in nuclear photobodies upon response to red light. Binds to the splicing factor 1 SF1, involved in 3' splicing site recognition. In terms of tissue distribution, expressed ubiquitously with highest levels in dry seeds and in cells surrounding the base of trichomes and guard cells.

Its subcellular location is the nucleus. The protein localises to the nucleus speckle. As a member of the SWAP1-SFPS-RRC1 splicing factor complex, modulates photomorphogenesis by regulating the gene expression and pre-messenger RNA (mRNA) alternative splicing of a large number of genes, including those involved in plant responses to light signaling, probably by helping in the 3' splice site determination. Associates with and regulates EARLY FLOWERING 3 (ELF3) mRNA processing, a key component of the circadian clock also involved in photomorphogenesis. Required for light-regulated (red, far-red and blue lights) photomorphogenesis in a PHYB- and PHYTOCHROME INTERACTING FACTORS- (PIFs) dependent manner. Promotes flowering under both short (SD) and long days (LD). Controls abscisic acid (ABA) sensitivity during seed development, stomatal responsiveness and germination by monitoring ABI3 splicing, upstream of the splicing factor SUPPRESSOR OF ABI3-ABI5. Seems to be involved in the resistance to UV light and chemical DNA-damaging agents. This Arabidopsis thaliana (Mouse-ear cress) protein is DNA-damage-repair/toleration protein 111.